The sequence spans 247 residues: Cell division protein ZapD (247 aa).

This sequence belongs to the ZapD family. In terms of assembly, interacts with FtsZ.

The protein resides in the cytoplasm. Cell division factor that enhances FtsZ-ring assembly. Directly interacts with FtsZ and promotes bundling of FtsZ protofilaments, with a reduction in FtsZ GTPase activity. This Escherichia coli O139:H28 (strain E24377A / ETEC) protein is Cell division protein ZapD.